The primary structure comprises 884 residues: Valine--tRNA ligase (884 aa).

The 'HIGH' region motif lies at Pro47–His57. The 'KMSKS' region motif lies at Lys525 to Ser529. Lys528 lines the ATP pocket. The stretch at Ala812–Lys884 forms a coiled coil.

It belongs to the class-I aminoacyl-tRNA synthetase family. ValS type 1 subfamily. Monomer.

It is found in the cytoplasm. The enzyme catalyses tRNA(Val) + L-valine + ATP = L-valyl-tRNA(Val) + AMP + diphosphate. Functionally, catalyzes the attachment of valine to tRNA(Val). As ValRS can inadvertently accommodate and process structurally similar amino acids such as threonine, to avoid such errors, it has a 'posttransfer' editing activity that hydrolyzes mischarged Thr-tRNA(Val) in a tRNA-dependent manner. The polypeptide is Valine--tRNA ligase (Nitratidesulfovibrio vulgaris (strain ATCC 29579 / DSM 644 / CCUG 34227 / NCIMB 8303 / VKM B-1760 / Hildenborough) (Desulfovibrio vulgaris)).